A 554-amino-acid chain; its full sequence is DM7 family protein GG17593 (554 aa).

Belongs to the DM7 family.

In Drosophila erecta (Fruit fly), this protein is DM7 family protein GG17593.